The primary structure comprises 315 residues: Ribose-phosphate pyrophosphokinase (315 aa).

ATP contacts are provided by residues 41-43 and 100-101; these read DGE and RQ. Mg(2+) is bound by residues His-134 and Asp-173. Residue Lys-196 is part of the active site. D-ribose 5-phosphate is bound by residues Arg-198, Asp-222, and 226–230; that span reads DTAGT.

This sequence belongs to the ribose-phosphate pyrophosphokinase family. Class I subfamily. Homohexamer. The cofactor is Mg(2+).

The protein resides in the cytoplasm. It carries out the reaction D-ribose 5-phosphate + ATP = 5-phospho-alpha-D-ribose 1-diphosphate + AMP + H(+). It functions in the pathway metabolic intermediate biosynthesis; 5-phospho-alpha-D-ribose 1-diphosphate biosynthesis; 5-phospho-alpha-D-ribose 1-diphosphate from D-ribose 5-phosphate (route I): step 1/1. Its function is as follows. Involved in the biosynthesis of the central metabolite phospho-alpha-D-ribosyl-1-pyrophosphate (PRPP) via the transfer of pyrophosphoryl group from ATP to 1-hydroxyl of ribose-5-phosphate (Rib-5-P). The polypeptide is Ribose-phosphate pyrophosphokinase (Bacillus caldolyticus).